We begin with the raw amino-acid sequence, 524 residues long: Glutamyl-tRNA(Gln) amidotransferase subunit A (524 aa).

Active-site charge relay system residues include Lys109 and Ser184. Ser208 (acyl-ester intermediate) is an active-site residue.

The protein belongs to the amidase family. GatA subfamily. As to quaternary structure, heterotrimer of A, B and C subunits.

The enzyme catalyses L-glutamyl-tRNA(Gln) + L-glutamine + ATP + H2O = L-glutaminyl-tRNA(Gln) + L-glutamate + ADP + phosphate + H(+). Allows the formation of correctly charged Gln-tRNA(Gln) through the transamidation of misacylated Glu-tRNA(Gln) in organisms which lack glutaminyl-tRNA synthetase. The reaction takes place in the presence of glutamine and ATP through an activated gamma-phospho-Glu-tRNA(Gln). The sequence is that of Glutamyl-tRNA(Gln) amidotransferase subunit A from Tropheryma whipplei (strain TW08/27) (Whipple's bacillus).